Here is a 27-residue protein sequence, read N- to C-terminus: Phospholipase A2 1 (27 aa).

It belongs to the phospholipase A2 family. Group I subfamily. The cofactor is Ca(2+). As to expression, expressed by the venom gland.

It is found in the secreted. The enzyme catalyses a 1,2-diacyl-sn-glycero-3-phosphocholine + H2O = a 1-acyl-sn-glycero-3-phosphocholine + a fatty acid + H(+). Its function is as follows. Snake venom phospholipase A2 (PLA2) that inhibits neuromuscular transmission by blocking acetylcholine release from the nerve termini. PLA2 catalyzes the calcium-dependent hydrolysis of the 2-acyl groups in 3-sn-phosphoglycerides. In Micrurus nigrocinctus (Central American coral snake), this protein is Phospholipase A2 1.